A 1054-amino-acid chain; its full sequence is Putative disease resistance RPP13-like protein 1 (1054 aa).

2 leucine-zipper regions span residues 9 to 20 and 39 to 53; these read LAAFLQALFQTL and LERLSTALLTITAVL. Residues 117-147 adopt a coiled-coil conformation; sequence DFLDGNSEHLETRLEKVTIRLERLASQRNIL. The NB-ARC domain occupies 152–462; it reads LTAMIPKQRL…AEGFLQQTRS (311 aa). Position 203 to 210 (203 to 210) interacts with ATP; it reads GIGGVGKT. 5 LRR repeats span residues 579–600, 603–624, 626–648, 650–672, and 676–697; these read RLRVLSLSHYKIARLPPDFFKN, HARFLDLSRTELEKLPKSLCYM, NLQTLLLSYCSSLKELPTDISNL, NLRYLDLIGTKLRQMPRRFGRLK, and TLTTFFVSASDGSRISELGGLH. The tract at residues 1018–1054 is disordered; the sequence is PQYHHPQFHLPRSNVSGSPKSHGSHRSYDSRSSSRYD. The span at 1043 to 1054 shows a compositional bias: basic and acidic residues; that stretch reads RSYDSRSSSRYD.

The protein belongs to the disease resistance NB-LRR family. RPP13 subfamily.

In terms of biological role, potential disease resistance protein. In Arabidopsis thaliana (Mouse-ear cress), this protein is Putative disease resistance RPP13-like protein 1 (RPPL1).